Reading from the N-terminus, the 156-residue chain is Ribosomal RNA large subunit methyltransferase H (156 aa).

Residues L72 and G104 each contribute to the S-adenosyl-L-methionine site.

Belongs to the RNA methyltransferase RlmH family. Homodimer.

The protein localises to the cytoplasm. It carries out the reaction pseudouridine(1915) in 23S rRNA + S-adenosyl-L-methionine = N(3)-methylpseudouridine(1915) in 23S rRNA + S-adenosyl-L-homocysteine + H(+). Its function is as follows. Specifically methylates the pseudouridine at position 1915 (m3Psi1915) in 23S rRNA. The sequence is that of Ribosomal RNA large subunit methyltransferase H from Maricaulis maris (strain MCS10) (Caulobacter maris).